We begin with the raw amino-acid sequence, 231 residues long: Probable intron-encoded endonuclease 1 (231 aa).

This sequence belongs to the LAGLIDADG endonuclease family.

It is found in the mitochondrion. In terms of biological role, endonuclease involved in mitochondrial 21S rRNA gene intron homing. This chain is Probable intron-encoded endonuclease 1, found in Wickerhamomyces canadensis (Yeast).